A 395-amino-acid chain; its full sequence is Tyrosine--tRNA ligase 2 (395 aa).

Positions 42–51 (PTAPDIHLGH) match the 'HIGH' region motif. A 'KMSKS' region motif is present at residues 226–230 (KMSKS). Lys-229 serves as a coordination point for ATP. One can recognise an S4 RNA-binding domain in the interval 334–395 (TPMANLLKEA…KRKFARITIA (62 aa)).

Belongs to the class-I aminoacyl-tRNA synthetase family. TyrS type 2 subfamily. In terms of assembly, homodimer.

It localises to the cytoplasm. It catalyses the reaction tRNA(Tyr) + L-tyrosine + ATP = L-tyrosyl-tRNA(Tyr) + AMP + diphosphate + H(+). Its function is as follows. Catalyzes the attachment of tyrosine to tRNA(Tyr) in a two-step reaction: tyrosine is first activated by ATP to form Tyr-AMP and then transferred to the acceptor end of tRNA(Tyr). The protein is Tyrosine--tRNA ligase 2 of Vibrio vulnificus (strain CMCP6).